A 546-amino-acid chain; its full sequence is MAELTIDPATIRKALDDFVEAYTPSETPTQEVGHVATAGDGIAHVTGLPGCMANELLTFEDGTLGLAFNLDAREIGVVILGDFVGIEEGQEVRRTGEVLSVPVGDGFLGRVVDPLGRPIDGMGEIKSEGRRILEAQAPDVMHRHPVDQPMSTGLKAIDAMTPIGRGQRQLIIGDRQTGKTAIAIDTIINQKKNWESGDPKKQVRCIYVAIGQKGSTIASVKQSLEEAGAMEYTTIVASPASDSAGFKYIAPYTGSAIGQHWMYNGKDVLIVFDDLSKQAEAYRSISLLLRRPPGREAYPGDVFYLHSRLLERCARVSDDLGGGSMTGLPIVETKANDVSAYIPTNVISITDGQIFLQSDLFNAGQRPAVDVGISVSRVGGAAQTKALKKVSGTLKISLARYRSLESFAMFASDLDAASKAQLNRGARLTELLKQPQFSPYSMEQEVVSVWAGTHGKFDDLAIADVLPFEHGLLEYVDRNTDILTTIRDTGDFTKETEEALDKAVDAFRETYVTKAGKPLVDKKTAPKSVTPVDQEQIKAGKAQEKK.

173 to 180 (GDRQTGKT) is a binding site for ATP. The tract at residues 520-546 (VDKKTAPKSVTPVDQEQIKAGKAQEKK) is disordered. The segment covering 535–546 (EQIKAGKAQEKK) has biased composition (basic and acidic residues).

This sequence belongs to the ATPase alpha/beta chains family. F-type ATPases have 2 components, CF(1) - the catalytic core - and CF(0) - the membrane proton channel. CF(1) has five subunits: alpha(3), beta(3), gamma(1), delta(1), epsilon(1). CF(0) has three main subunits: a(1), b(2) and c(9-12). The alpha and beta chains form an alternating ring which encloses part of the gamma chain. CF(1) is attached to CF(0) by a central stalk formed by the gamma and epsilon chains, while a peripheral stalk is formed by the delta and b chains.

The protein resides in the cell membrane. The enzyme catalyses ATP + H2O + 4 H(+)(in) = ADP + phosphate + 5 H(+)(out). Its function is as follows. Produces ATP from ADP in the presence of a proton gradient across the membrane. The alpha chain is a regulatory subunit. This is ATP synthase subunit alpha from Bifidobacterium animalis subsp. lactis (strain AD011).